Here is a 363-residue protein sequence, read N- to C-terminus: 3-isopropylmalate dehydrogenase (363 aa).

Residue G77–E90 participates in NAD(+) binding. 4 residues coordinate substrate: R98, R108, R137, and D226. Residues D226, D250, and D254 each contribute to the Mg(2+) site. An NAD(+)-binding site is contributed by G284 to N296.

Belongs to the isocitrate and isopropylmalate dehydrogenases family. LeuB type 1 subfamily. Homodimer. It depends on Mg(2+) as a cofactor. Requires Mn(2+) as cofactor.

The protein resides in the cytoplasm. It carries out the reaction (2R,3S)-3-isopropylmalate + NAD(+) = 4-methyl-2-oxopentanoate + CO2 + NADH. It functions in the pathway amino-acid biosynthesis; L-leucine biosynthesis; L-leucine from 3-methyl-2-oxobutanoate: step 3/4. Functionally, catalyzes the oxidation of 3-carboxy-2-hydroxy-4-methylpentanoate (3-isopropylmalate) to 3-carboxy-4-methyl-2-oxopentanoate. The product decarboxylates to 4-methyl-2 oxopentanoate. This Buchnera aphidicola subsp. Pemphigus spyrothecae protein is 3-isopropylmalate dehydrogenase.